The primary structure comprises 508 residues: Adenylosuccinate synthetase 1, chloroplastic (508 aa).

The transit peptide at 1-56 (MNISILRLDSNPITTATSPATATANHRSGILGCYNGTYSCRLNQLQQRKKNPSIIV) directs the protein to the chloroplast. Residues 95–101 (GDEGKGK) and 123–125 (GHT) contribute to the GTP site. The active-site Proton acceptor is D96. Mg(2+)-binding residues include D96 and G123. Residues 96–99 (DEGK), 121–124 (NAGH), T213, R227, Q307, T322, and R386 contribute to the IMP site. H124 (proton donor) is an active-site residue. 382–388 (TTTGRPR) contacts substrate. GTP-binding positions include R388, 414–416 (KLD), and 497–499 (GIG).

It belongs to the adenylosuccinate synthetase family. Homodimer. Mg(2+) is required as a cofactor.

The protein resides in the plastid. Its subcellular location is the chloroplast. The catalysed reaction is IMP + L-aspartate + GTP = N(6)-(1,2-dicarboxyethyl)-AMP + GDP + phosphate + 2 H(+). It participates in purine metabolism; AMP biosynthesis via de novo pathway; AMP from IMP: step 1/2. Functionally, plays an important role in the de novo pathway and in the salvage pathway of purine nucleotide biosynthesis. Catalyzes the first committed step in the biosynthesis of AMP from IMP. This Capsicum frutescens (Cayenne pepper) protein is Adenylosuccinate synthetase 1, chloroplastic.